A 104-amino-acid polypeptide reads, in one-letter code: Large ribosomal subunit protein uL24 (104 aa).

It belongs to the universal ribosomal protein uL24 family. Part of the 50S ribosomal subunit.

Its function is as follows. One of two assembly initiator proteins, it binds directly to the 5'-end of the 23S rRNA, where it nucleates assembly of the 50S subunit. In terms of biological role, one of the proteins that surrounds the polypeptide exit tunnel on the outside of the subunit. The chain is Large ribosomal subunit protein uL24 from Chelativorans sp. (strain BNC1).